A 411-amino-acid polypeptide reads, in one-letter code: Creatinase (411 aa).

Histidine 240 is a catalytic residue.

Belongs to the peptidase M24 family. Creatinase subfamily. As to quaternary structure, homodimer.

The enzyme catalyses creatine + H2O = sarcosine + urea. This chain is Creatinase, found in Bacillus sp. (strain B-0618).